The primary structure comprises 69 residues: Small archaeal modifier protein 2 (69 aa).

Residue Lys55 forms a Glycyl lysine isopeptide (Lys-Gly) (interchain with G-Cter in SAMP2) linkage. Residue Gly69 is modified to 1-thioglycine; alternate. Residue Gly69 is modified to Glycyl adenylate; alternate. Gly69 is covalently cross-linked (Glycyl lysine isopeptide (Gly-Lys) (interchain with K-? in acceptor proteins); alternate).

The C-terminal glycine is likely acyl-adenylated (-COAMP) by UbaA, and also probably thiocarboxylated (-COSH) to function in sulfur transfer.

In terms of biological role, functions as a protein modifier covalently attached to lysine residues of substrate proteins, as well as a sulfur carrier in tRNA thiolation. The protein modification process is termed sampylation and involves the formation of an isopeptide bond between the SAMP2 C-terminal glycine carboxylate and the epsilon-amino group of lysine residues on target proteins. Is able to form polymeric chains with itself likely at Lys-55, similar to ubiquitin and other ubiquitin-like proteins. May serve as a proteolytic signal in the cell to target proteins for degradation by proteasomes. In Pyrococcus furiosus (strain ATCC 43587 / DSM 3638 / JCM 8422 / Vc1), this protein is Small archaeal modifier protein 2.